An 85-amino-acid chain; its full sequence is ATP synthase epsilon chain (85 aa).

Belongs to the ATPase epsilon chain family. As to quaternary structure, F-type ATPases have 2 components, CF(1) - the catalytic core - and CF(0) - the membrane proton channel. CF(1) has five subunits: alpha(3), beta(3), gamma(1), delta(1), epsilon(1). CF(0) has three main subunits: a, b and c.

The protein resides in the cell membrane. Its function is as follows. Produces ATP from ADP in the presence of a proton gradient across the membrane. This Frankia casuarinae (strain DSM 45818 / CECT 9043 / HFP020203 / CcI3) protein is ATP synthase epsilon chain.